Reading from the N-terminus, the 188-residue chain is MANFGCEDLRSQDGESFLYFAYGSNLLTERIHLRNPSAVFYSVARLQDFKLDFGNPQGKTSETWHGGIATIFESPGDEVWGVVWKMNKSNLSSLDKQEGVKSGMYVPIEVTVSTQEGKEITCRSYQMTNYESVPPSPQYKKVICMGAKENGLPLEYQKKLNSIEPNDYKGKVSEEIEDIIKKGEAKTH.

19–22 (YFAY) is a binding site for substrate. Glu98 acts as the Proton acceptor in catalysis. Position 173 is a phosphoserine (Ser173).

It belongs to the gamma-glutamylcyclotransferase family. As to quaternary structure, homodimer.

The catalysed reaction is an alpha-(gamma-L-glutamyl)-L-amino acid = 5-oxo-L-proline + an L-alpha-amino acid. Catalyzes the formation of 5-oxoproline from gamma-glutamyl dipeptides and may play a significant role in glutathione homeostasis. Induces release of cytochrome c from mitochondria with resultant induction of apoptosis. The polypeptide is Gamma-glutamylcyclotransferase (GGCT) (Bos taurus (Bovine)).